The sequence spans 488 residues: Inosine-5'-monophosphate dehydrogenase (488 aa).

CBS domains lie at 95-153 and 157-214; these read VITN…SMKI and MTKE…PNSS. Residues Asp-251 and 301–303 each bind NAD(+); that span reads GIG. Gly-303 and Gly-305 together coordinate K(+). Ser-306 lines the IMP pocket. Cys-308 contributes to the K(+) binding site. The active-site Thioimidate intermediate is Cys-308. IMP is bound by residues 341–343, 364–365, and 388–392; these read DGG, GS, and YRGMG. The active-site Proton acceptor is the Arg-404. Position 416 (Glu-416) interacts with IMP. K(+) contacts are provided by Glu-470, Ser-471, and His-472.

It belongs to the IMPDH/GMPR family. As to quaternary structure, homotetramer. Requires K(+) as cofactor.

The catalysed reaction is IMP + NAD(+) + H2O = XMP + NADH + H(+). It participates in purine metabolism; XMP biosynthesis via de novo pathway; XMP from IMP: step 1/1. Its activity is regulated as follows. Mycophenolic acid (MPA) is a non-competitive inhibitor that prevents formation of the closed enzyme conformation by binding to the same site as the amobile flap. In contrast, mizoribine monophosphate (MZP) is a competitive inhibitor that induces the closed conformation. MPA is a potent inhibitor of mammalian IMPDHs but a poor inhibitor of the bacterial enzymes. MZP is a more potent inhibitor of bacterial IMPDH. Catalyzes the conversion of inosine 5'-phosphate (IMP) to xanthosine 5'-phosphate (XMP), the first committed and rate-limiting step in the de novo synthesis of guanine nucleotides, and therefore plays an important role in the regulation of cell growth. The polypeptide is Inosine-5'-monophosphate dehydrogenase (Bacillus subtilis (strain 168)).